We begin with the raw amino-acid sequence, 26 residues long: M-poneritoxin-Ng1c (26 aa).

As to expression, expressed by the venom gland.

It is found in the secreted. The protein localises to the target cell membrane. In terms of biological role, has a broad spectrum of activity against both Gram-positive and Gram-negative bacteria and S.cerevisiae. Has insecticidal and hemolytic activities. May act by disrupting the integrity of the bacterial cell membrane. The chain is M-poneritoxin-Ng1c from Neoponera goeldii (Ponerine ant).